Here is a 261-residue protein sequence, read N- to C-terminus: MTKVQYKHTEIAVKKKLGQNFLTDRNTIRKIVQSAEIQPGDHVVEIGPGFGALTSAILEVCPSFTAVEKDRKLADFIREEYPSVNLVESDILEVDFAKLAEEGPVKVMGNIPYSITSPILFKLLENRSHIISETLMMQHEVALRLAANPGTKEYGILAVQLQTFCDVRYLFKVGKKVFRPRPEVDSAVVRIVPKKTPLDDCETEFRRFVRLAFQQRRKTLQNNLKQHYDISQLSASELQRRAESFTITEFEMLFSRIRPLQ.

S-adenosyl-L-methionine is bound by residues Asn20, Leu22, Gly47, Glu68, Asp90, and Asn110.

The protein belongs to the class I-like SAM-binding methyltransferase superfamily. rRNA adenine N(6)-methyltransferase family. RsmA subfamily.

The protein resides in the cytoplasm. It catalyses the reaction adenosine(1518)/adenosine(1519) in 16S rRNA + 4 S-adenosyl-L-methionine = N(6)-dimethyladenosine(1518)/N(6)-dimethyladenosine(1519) in 16S rRNA + 4 S-adenosyl-L-homocysteine + 4 H(+). Its function is as follows. Specifically dimethylates two adjacent adenosines (A1518 and A1519) in the loop of a conserved hairpin near the 3'-end of 16S rRNA in the 30S particle. May play a critical role in biogenesis of 30S subunits. In Prosthecochloris aestuarii (strain DSM 271 / SK 413), this protein is Ribosomal RNA small subunit methyltransferase A.